Reading from the N-terminus, the 525-residue chain is GMP synthase [glutamine-hydrolyzing] (525 aa).

In terms of domain architecture, Glutamine amidotransferase type-1 spans 9 to 207 (RILILDFGSQ…VLDICGCEAL (199 aa)). Residue Cys86 is the Nucleophile of the active site. Residues His181 and Glu183 contribute to the active site. The GMPS ATP-PPase domain maps to 208 to 400 (WTPSKIAEDA…LGLPYDMVYR (193 aa)). 235 to 241 (SGGVDSS) serves as a coordination point for ATP.

In terms of assembly, homodimer.

The catalysed reaction is XMP + L-glutamine + ATP + H2O = GMP + L-glutamate + AMP + diphosphate + 2 H(+). It functions in the pathway purine metabolism; GMP biosynthesis; GMP from XMP (L-Gln route): step 1/1. Catalyzes the synthesis of GMP from XMP. In Pseudomonas fluorescens (strain Pf0-1), this protein is GMP synthase [glutamine-hydrolyzing].